Consider the following 194-residue polypeptide: Adenylate kinase isoenzyme 1 (194 aa).

At Met-1 the chain carries N-acetylmethionine. 18–23 (GSGKGT) lines the ATP pocket. Ser-38 is modified (phosphoserine). Positions 38–67 (STGDLLRAEVSSGSARGKKLSEIMEKGQLV) are NMP. Residues Thr-39, Arg-44, 65 to 67 (QLV), 94 to 97 (GYPR), and Gln-101 each bind AMP. Residues 131–141 (KRGETSGRVDD) form an LID region. Arg-132 lines the ATP pocket. The AMP site is built by Arg-138 and Arg-149. Residue Gly-177 coordinates ATP.

Belongs to the adenylate kinase family. AK1 subfamily. In terms of assembly, monomer. Mg(2+) serves as cofactor.

It localises to the cytoplasm. It carries out the reaction a ribonucleoside 5'-phosphate + ATP = a ribonucleoside 5'-diphosphate + ADP. The catalysed reaction is AMP + ATP = 2 ADP. It catalyses the reaction dAMP + ATP = dADP + ADP. The enzyme catalyses dATP + AMP = dADP + ADP. It carries out the reaction dAMP + dATP = 2 dADP. The catalysed reaction is a 2'-deoxyribonucleoside 5'-diphosphate + ATP = a 2'-deoxyribonucleoside 5'-triphosphate + ADP. It catalyses the reaction a ribonucleoside 5'-diphosphate + ATP = a ribonucleoside 5'-triphosphate + ADP. The enzyme catalyses CDP + GTP = CTP + GDP. It carries out the reaction GDP + ATP = GTP + ADP. The catalysed reaction is UDP + ATP = UTP + ADP. It catalyses the reaction GTP + UDP = UTP + GDP. The enzyme catalyses dTDP + GTP = dTTP + GDP. It carries out the reaction dCDP + GTP = dCTP + GDP. The catalysed reaction is dGDP + ATP = dGTP + ADP. It catalyses the reaction dADP + GTP = dATP + GDP. The enzyme catalyses thiamine diphosphate + ADP = thiamine triphosphate + AMP. In terms of biological role, catalyzes the reversible transfer of the terminal phosphate group between ATP and AMP. Also displays broad nucleoside diphosphate kinase activity. Plays an important role in cellular energy homeostasis and in adenine nucleotide metabolism. Also catalyzes at a very low rate the synthesis of thiamine triphosphate (ThTP) from thiamine diphosphate (ThDP) and ADP. The sequence is that of Adenylate kinase isoenzyme 1 from Oryctolagus cuniculus (Rabbit).